The primary structure comprises 703 residues: Centrosomal protein of 63 kDa (703 aa).

Residue Met1 is modified to N-acetylmethionine. 4 coiled-coil regions span residues 22-199, 242-306, 353-533, and 676-703; these read EAEL…ESVE, MTVL…QHAV, LEGS…STQM, and HILERLDAHIEELKRESEKTVRQFTALK. Residue Ser278 is modified to Phosphoserine.

Belongs to the CEP63 family. Interacts with CEP152 and CDK1; these interactions recruit both ligands to centrosomes. Interacts with CDK2, CDK5RAP2, WDR62, CEP90, KIAA0753/moonraker and CCDC14. CEP63, CDK5RAP2, CEP152, WDR62 are proposed to form a stepwise assembled complex at the centrosome forming a ring near parental centrioles. Interacts with CCDC57; the interaction is required for their location to proximal end of centrioles. Interacts with FXR1; promoting its stabilization. In terms of assembly, (Microbial infection) Interacts with zika virus serine protease NS3; this interaction disorganizes the centrosome. In terms of processing, polyubiquitinated via 'Lys-48'-linked ubiquitin, leading to its degradation. Deubiquitinated by USP36, promoting its stabilization.

The protein resides in the cytoplasm. The protein localises to the cytoskeleton. It is found in the microtubule organizing center. Its subcellular location is the centrosome. It localises to the centriole. The protein resides in the centriolar satellite. Required for normal spindle assembly. Plays a key role in mother-centriole-dependent centriole duplication; the function seems also to involve CEP152, CDK5RAP2 and WDR62 through a stepwise assembled complex at the centrosome that recruits CDK2 required for centriole duplication. Reported to be required for centrosomal recruitment of CEP152; however, this function has been questioned. Also recruits CDK1 to centrosomes. Plays a role in DNA damage response. Following DNA damage, such as double-strand breaks (DSBs), is removed from centrosomes; this leads to the inactivation of spindle assembly and delay in mitotic progression. Promotes stabilization of FXR1 protein by inhibiting FXR1 ubiquitination. This is Centrosomal protein of 63 kDa from Homo sapiens (Human).